A 262-amino-acid chain; its full sequence is Ribosomal RNA small subunit methyltransferase A (262 aa).

Residues Asn13, Leu15, Gly40, Glu61, Asp85, and Asn104 each contribute to the S-adenosyl-L-methionine site.

This sequence belongs to the class I-like SAM-binding methyltransferase superfamily. rRNA adenine N(6)-methyltransferase family. RsmA subfamily.

Its subcellular location is the cytoplasm. It carries out the reaction adenosine(1518)/adenosine(1519) in 16S rRNA + 4 S-adenosyl-L-methionine = N(6)-dimethyladenosine(1518)/N(6)-dimethyladenosine(1519) in 16S rRNA + 4 S-adenosyl-L-homocysteine + 4 H(+). Specifically dimethylates two adjacent adenosines (A1518 and A1519) in the loop of a conserved hairpin near the 3'-end of 16S rRNA in the 30S particle. May play a critical role in biogenesis of 30S subunits. The chain is Ribosomal RNA small subunit methyltransferase A from Chromobacterium violaceum (strain ATCC 12472 / DSM 30191 / JCM 1249 / CCUG 213 / NBRC 12614 / NCIMB 9131 / NCTC 9757 / MK).